A 65-amino-acid polypeptide reads, in one-letter code: Large ribosomal subunit protein bL35 (65 aa).

It belongs to the bacterial ribosomal protein bL35 family.

This Sodalis glossinidius (strain morsitans) protein is Large ribosomal subunit protein bL35.